A 1232-amino-acid chain; its full sequence is Pyruvate:ferredoxin oxidoreductase (1232 aa).

Position 31 (Thr-31) interacts with pyruvate. Thiamine diphosphate is bound at residue Glu-64. Arg-114 serves as a coordination point for pyruvate. CoA-binding positions include 427–431 (ADGTV), Lys-459, Asn-560, and Asn-602. 4Fe-4S ferredoxin-type domains follow at residues 680–709 (NVPQWVPENCIQCNQCAFVCPHSAILPVLA) and 736–767 (FRIQINTLDCMGCGNCADICPPKEKALVMQPL). 10 residues coordinate [4Fe-4S] cluster: Cys-689, Cys-692, Cys-695, Cys-699, Cys-745, Cys-748, Cys-751, Cys-755, Cys-812, and Cys-815. Thiamine diphosphate contacts are provided by residues Glu-817, Cys-840, and 962 to 965 (GDGW). Cys-840 provides a ligand contact to [4Fe-4S] cluster. Asp-963 is a Mg(2+) binding site. Ca(2+)-binding residues include Asp-983 and Asn-985. Residues Thr-991 and Val-993 each coordinate Mg(2+). 991–996 (TEVYSN) is a thiamine diphosphate binding site. Ca(2+)-binding residues include Ala-1056, Phe-1059, Gly-1061, and Ser-1063. Cys-1071 is a [4Fe-4S] cluster binding site. A disulfide bridge links Cys-1195 with Cys-1212. Positions 1197–1232 (RDDTPMMARPDSGEACDQNRAGTSEQQGDLSKRTKK) are disordered. Residues 1216 to 1225 (RAGTSEQQGD) are compositionally biased toward polar residues.

This sequence belongs to the pyruvate:ferredoxin/flavodoxin oxidoreductase family. Homodimer. It depends on [4Fe-4S] cluster as a cofactor. Requires thiamine diphosphate as cofactor. The cofactor is Mg(2+).

The protein resides in the cytoplasm. The catalysed reaction is 2 oxidized [2Fe-2S]-[ferredoxin] + pyruvate + CoA = 2 reduced [2Fe-2S]-[ferredoxin] + acetyl-CoA + CO2 + H(+). Functionally, catalyzes the ferredoxin-dependent oxidative decarboxylation of pyruvate. Required for the transfer of electrons from pyruvate to ferredoxin. Ferredoxin I and ferredoxin II, which are single 4Fe-4S cluster ferredoxins are the most effective electron carriers of POR. The sequence is that of Pyruvate:ferredoxin oxidoreductase from Desulfocurvibacter africanus (Desulfovibrio africanus).